The chain runs to 204 residues: Glycerol-3-phosphate acyltransferase (204 aa).

The next 5 membrane-spanning stretches (helical) occupy residues Ile-8–Phe-28, Val-53–Ala-73, Phe-81–Gly-101, Phe-116–Ile-136, and Val-155–Leu-175.

It belongs to the PlsY family. As to quaternary structure, probably interacts with PlsX.

The protein resides in the cell inner membrane. It carries out the reaction an acyl phosphate + sn-glycerol 3-phosphate = a 1-acyl-sn-glycero-3-phosphate + phosphate. It participates in lipid metabolism; phospholipid metabolism. In terms of biological role, catalyzes the transfer of an acyl group from acyl-phosphate (acyl-PO(4)) to glycerol-3-phosphate (G3P) to form lysophosphatidic acid (LPA). This enzyme utilizes acyl-phosphate as fatty acyl donor, but not acyl-CoA or acyl-ACP. This chain is Glycerol-3-phosphate acyltransferase, found in Francisella tularensis subsp. holarctica (strain OSU18).